Consider the following 955-residue polypeptide: Structure-specific endonuclease subunit SLX4 (955 aa).

Disordered regions lie at residues 75-173 (QAEQ…RTTS), 189-231 (PVTT…TVSR), 352-376 (GPSN…KKPR), 539-608 (EMQK…PTKI), 621-648 (PIVA…PPPR), 705-784 (AAGQ…ASPD), and 819-846 (LDSD…EKDS). A compositionally biased stretch (basic residues) spans 123–137 (RKARKTANGVTKKKR). The segment covering 150-159 (NEITTPTKNQ) has biased composition (polar residues). Low complexity predominate over residues 189-198 (PVTTSTTDLT). Positions 209-225 (TKSRVRKTSSAASRKKK) are enriched in basic residues. A compositionally biased stretch (polar residues) spans 352 to 362 (GPSNDSKIPNQ). Positions 539–551 (EMQKSPSRSEPKG) are enriched in basic and acidic residues. Residues 579–601 (SANSAEHTLKTQASKSTHFASTT) are compositionally biased toward polar residues. Composition is skewed to low complexity over residues 705–720 (AAGQ…RTSA) and 727–737 (KTSTAAAAAKS). Composition is skewed to basic residues over residues 738–748 (PTKRPVGRPRK) and 767–776 (KRPRGRPKKN). Over residues 828-841 (SPSPSLSPEPVFSS) the composition is skewed to low complexity.

It belongs to the SLX4 family. In terms of assembly, forms a heterodimer with SLX1. Phosphorylated in response to DNA damage.

Its subcellular location is the nucleus. In terms of biological role, regulatory subunit of the SLX1-SLX4 structure-specific endonuclease that resolves DNA secondary structures generated during DNA repair and recombination. Has endonuclease activity towards branched DNA substrates, introducing single-strand cuts in duplex DNA close to junctions with ss-DNA. This chain is Structure-specific endonuclease subunit SLX4, found in Pyricularia oryzae (strain 70-15 / ATCC MYA-4617 / FGSC 8958) (Rice blast fungus).